Here is a 434-residue protein sequence, read N- to C-terminus: Nuclear receptor subfamily 1 group I member 2 (434 aa).

The nuclear receptor DNA-binding region spans 38-107 (PQICRVCGDK…RLRKCLESGM (70 aa)). 2 NR C4-type zinc fingers span residues 41 to 61 (CRVC…CEGC) and 77 to 102 (CPFR…LRKC). The Bipartite nuclear localization signal signature appears at 66 to 92 (RRAMKRNARLRCPFRKGACEITRKTRR). Residues 108-145 (KKEMIMSDAAVEERRALIKRKKRERIGTQPPGVQGLTE) are hinge. One can recognise an NR LBD domain in the interval 146–433 (EQRMMIRELM…LMQELFGITG (288 aa)). Residues Ser247, 285–288 (QLRF), and His407 contribute to the hyperforin site.

This sequence belongs to the nuclear hormone receptor family. NR1 subfamily. As to quaternary structure, heterodimer with RXRA. Interacts with NCOA1. Interacts (via domain NR LBD) with CRY1 and CRY2 in a ligand-dependent manner.

Its subcellular location is the nucleus. In terms of biological role, nuclear receptor that binds and is activated by a variety of endogenous and xenobiotic compounds. Transcription factor that activates the transcription of multiple genes involved in the metabolism and secretion of potentially harmful xenobiotics, endogenous compounds and drugs. Response to specific ligands is species-specific, due to differences in the ligand-binding domain. Activated by naturally occurring steroids, such as pregnenolone and progesterone. Binds to a response element in the promoters of the CYP3A4 and ABCB1/MDR1 genes. The chain is Nuclear receptor subfamily 1 group I member 2 (NR1I2) from Macaca mulatta (Rhesus macaque).